Consider the following 162-residue polypeptide: Lipid droplet assembly factor 1-A (162 aa).

The Cytoplasmic portion of the chain corresponds to 1 to 42 (MASAENLYQEKMQELQKQMNKVMQTINNHSKVEAFLNSPFGQ). A helical membrane pass occupies residues 43–63 (YLDQHPFVTLSLLVFISLSAV). Topologically, residues 64–65 (PV) are lumenal. Residues 66-86 (GIFLTLIAGTAIAVCLAVLII) traverse the membrane as a helical segment. Residue glutamate 87 is a topological domain, cytoplasmic. The chain crosses the membrane as a helical span at residues 88–108 (GIVISVGGIALLCILCGLAVM). Position 109 (serine 109) is a topological domain, lumenal. A helical membrane pass occupies residues 110–130 (LGVAAVLCVSYVAGSSVLNYI). The Cytoplasmic portion of the chain corresponds to 131-162 (HAYRVTVGTRGRSGPISLNHETTTAEKSYRSS).

This sequence belongs to the LDAF1 family.

The protein resides in the endoplasmic reticulum membrane. It localises to the lipid droplet. In terms of biological role, plays an important role in the formation of lipid droplets (LD) which are storage organelles at the center of lipid and energy homeostasis. The polypeptide is Lipid droplet assembly factor 1-A (Xenopus laevis (African clawed frog)).